The sequence spans 256 residues: Thiazole synthase (256 aa).

K98 acts as the Schiff-base intermediate with DXP in catalysis. 1-deoxy-D-xylulose 5-phosphate contacts are provided by residues G159, 185-186, and 207-208; these read AG and NT.

This sequence belongs to the ThiG family. As to quaternary structure, homotetramer. Forms heterodimers with either ThiH or ThiS.

It is found in the cytoplasm. It carries out the reaction [ThiS sulfur-carrier protein]-C-terminal-Gly-aminoethanethioate + 2-iminoacetate + 1-deoxy-D-xylulose 5-phosphate = [ThiS sulfur-carrier protein]-C-terminal Gly-Gly + 2-[(2R,5Z)-2-carboxy-4-methylthiazol-5(2H)-ylidene]ethyl phosphate + 2 H2O + H(+). It functions in the pathway cofactor biosynthesis; thiamine diphosphate biosynthesis. Functionally, catalyzes the rearrangement of 1-deoxy-D-xylulose 5-phosphate (DXP) to produce the thiazole phosphate moiety of thiamine. Sulfur is provided by the thiocarboxylate moiety of the carrier protein ThiS. In vitro, sulfur can be provided by H(2)S. This is Thiazole synthase from Aliivibrio fischeri (strain ATCC 700601 / ES114) (Vibrio fischeri).